A 782-amino-acid chain; its full sequence is Anoctamin-9 (782 aa).

At 1 to 198 the chain is on the cytoplasmic side; the sequence is MQGEESLRIL…LYFVWLGWYT (198 aa). The helical transmembrane segment at 199 to 219 threads the bilayer; sequence YMLVPAALTGLLVFLSGFSLF. Residues 220–264 are Extracellular-facing; it reads EASQISKEICEAHDILMCPLGDHSRRYQRLSETCTFAKLTHLFDN. A Phosphoserine; by PKA modification is found at serine 250. The helical transmembrane segment at 265 to 285 threads the bilayer; that stretch reads DGTVVFAIFMALWATVFLEIW. The Cytoplasmic segment spans residues 286–331; that stretch reads KRQRARVVLHWDLYVWDEEQEEMALQLINCPDYKLRPYQHSYLRST. Residues 332–352 traverse the membrane as a helical segment; that stretch reads VILVLTLLMICLMIGMAHVLV. Residues 353 to 373 are Extracellular-facing; that stretch reads VYRVLASALFSSSAVPFLEEQ. A helical transmembrane segment spans residues 374–394; that stretch reads VTTAVVVTGALVHYVTIIIMT. At 395 to 423 the chain is on the cytoplasmic side; that stretch reads KINRCVALKLCDFEMPRTFSERESRFTIR. The helical transmembrane segment at 424–444 threads the bilayer; it reads FFTLQFFTHFSSLIYIAFILG. Topologically, residues 445–552 are extracellular; it reads RINGHPGKST…EMMIQYGFTT (108 aa). A helical membrane pass occupies residues 553–573; that stretch reads IFVAAFPLAPLLALFSNLVEI. At 574 to 604 the chain is on the cytoplasmic side; the sequence is RLDAIKMVWLQRRLVPRKAKDIGTWLQVLET. Residues 605–625 form a helical membrane-spanning segment; it reads IGVLAVIANGMVIAFTSEFIP. At 626–703 the chain is on the extracellular side; the sequence is RVVYKYRYSP…QFWFLLAIRL (78 aa). N-linked (GlcNAc...) asparagine glycosylation is found at asparagine 641, asparagine 652, asparagine 674, and asparagine 690. A helical membrane pass occupies residues 704–724; that stretch reads AFVILFEHVALCIKLIAAWFV. Over 725-782 the chain is Cytoplasmic; it reads PDIPQSVKNKVLEVKYQRLREKMWHGRQRLGGVGAGSRPPMPAHPTPASIFSARSTDV. The segment at 756–782 is disordered; sequence GVGAGSRPPMPAHPTPASIFSARSTDV.

This sequence belongs to the anoctamin family. Post-translationally, phosphorylated on serine residues by cAMP-dependent protein kinase A (PKA) which is essential for activation of its cation channel activity. Expressed in the kidney. Expressed in the olfactory epithelium.

It is found in the cell membrane. The protein resides in the endoplasmic reticulum. The catalysed reaction is a 1,2-diacyl-sn-glycero-3-phospho-L-serine(in) = a 1,2-diacyl-sn-glycero-3-phospho-L-serine(out). The enzyme catalyses a beta-D-galactosyl-(1&lt;-&gt;1')-N-acylsphing-4-enine(out) = a beta-D-galactosyl-(1&lt;-&gt;1')-N-acylsphing-4-enine(in). It catalyses the reaction a 1,2-diacyl-sn-glycero-3-phosphocholine(in) = a 1,2-diacyl-sn-glycero-3-phosphocholine(out). It carries out the reaction Ca(2+)(in) = Ca(2+)(out). The catalysed reaction is Na(+)(in) = Na(+)(out). The enzyme catalyses K(+)(in) = K(+)(out). Its activity is regulated as follows. Cation channel activity is activated via phosphorylation on serine residues by cAMP-dependent protein kinase A (PKA). Its function is as follows. PKA-activated nonselective cation channel. Discriminates poorly among cations but is more permeable to Ca(2+) ions than to monovalent cations. Acts as a calcium-activated calcium permeable channel which may operate as a endoplasmic reticulum (ER) Ca(2+)-leak channel, reducing the loading of the ER Ca(2+) store. Regulates intracellular Ca2+ signals, ion channel activity, and cytokine release in the renal tissue. Plays an important role in olfaction, amplifying cAMP-evoked cyclic nucleotide-gated (CNG) channel currents in the olfactory sensory neurons. Has calcium-dependent phospholipid scramblase activity; scrambles phosphatidylserine, phosphatidylcholine and galactosylceramide. Does not exhibit calcium-activated chloride channel (CaCC) activity. Can inhibit the activity of ANO1. In Homo sapiens (Human), this protein is Anoctamin-9 (ANO9).